A 545-amino-acid polypeptide reads, in one-letter code: Capsular polysaccharide phosphotransferase SacB (545 aa).

Belongs to the stealth family.

Functionally, may be the polymerase that links individual UDP-N-acetyl-D-mannosamine monomers. In serotype A the capsule is composed of repeated units of (alpha 1-6)-linked N-acetyl-D-mannosamine-1-phosphate. This is Capsular polysaccharide phosphotransferase SacB (sacB) from Neisseria meningitidis serogroup A.